The following is a 137-amino-acid chain: Small ribosomal subunit protein eS17 (137 aa).

This sequence belongs to the eukaryotic ribosomal protein eS17 family. In terms of assembly, component of the small ribosomal subunit. Mature ribosomes consist of a small (40S) and a large (60S) subunit. The 40S subunit contains about 32 different proteins and 1 molecule of RNA (18S). The 60S subunit contains 45 different proteins and 3 molecules of RNA (25S, 5.8S and 5S).

It localises to the cytoplasm. Its function is as follows. Component of the ribosome, a large ribonucleoprotein complex responsible for the synthesis of proteins in the cell. The small ribosomal subunit (SSU) binds messenger RNAs (mRNAs) and translates the encoded message by selecting cognate aminoacyl-transfer RNA (tRNA) molecules. The large subunit (LSU) contains the ribosomal catalytic site termed the peptidyl transferase center (PTC), which catalyzes the formation of peptide bonds, thereby polymerizing the amino acids delivered by tRNAs into a polypeptide chain. The nascent polypeptides leave the ribosome through a tunnel in the LSU and interact with protein factors that function in enzymatic processing, targeting, and the membrane insertion of nascent chains at the exit of the ribosomal tunnel. In Candida albicans (strain SC5314 / ATCC MYA-2876) (Yeast), this protein is Small ribosomal subunit protein eS17 (RPS17B).